Reading from the N-terminus, the 3323-residue chain is Mucin-3A (3323 aa).

A signal peptide spans 1–15; sequence MQLLGLLGLLWMLKA. Disordered regions lie at residues 218–243, 270–289, 325–345, 359–380, 539–677, 700–722, 734–756, 909–991, 1170–1201, 1318–1356, 1380–1442, 1484–1509, 1714–1746, 1793–1844, and 1900–2056; these read TISS…TSPT, TSMT…SSPT, ISRS…STVT, GTLS…TETA, MSAS…PSTE, NASS…GTNS, ETSS…KTAK, SFSS…TLTP, ISSA…TTPT, AESA…FPSS, AMTS…TNPV, TMTE…ETAK, TPSS…TPTS, FTSS…YPTS, and TSHS…SHST. Positions 270–284 are enriched in low complexity; sequence TSMTTTASQPTATNT. Positions 545–563 are enriched in polar residues; the sequence is GTTHTESISSPPASTSTLH. Residues 564–618 show a composition bias toward low complexity; sequence TTAESTLAPTTTTSFTTSTTMEPPSTTAATTGTGQTTFTSSTATFPETTTPTPTT. The span at 619–629 shows a compositional bias: polar residues; that stretch reads DMSTESLTTAM. Over residues 630-676 the composition is skewed to low complexity; it reads TSPPITSSVTSTNTVTSMTTTTSPPTTTNSFTSLTSMPLSSTPVPST. The segment covering 700–721 has biased composition (polar residues); that stretch reads NASSMTTSETTYPNSPTGPGTN. Residues 909-918 show a composition bias toward low complexity; that stretch reads SFSSSMSESS. The span at 919-932 shows a compositional bias: polar residues; sequence AGTTHTESISSPRG. Low complexity predominate over residues 933 to 991; the sequence is TTSTLHTTVESTPSPTTTTSFTTSTMMEPPSSTVSTTGRGQTTFPSSTATFPETTTLTP. A compositionally biased stretch (low complexity) spans 1324 to 1356; sequence PTTTTSFTTSPTMEPPSTTVATTGTGQTTFPSS. 32 tandem repeats follow at residues 1893–1910, 1911–1927, 1928–1944, 1945–1961, 1962–1978, 1979–1995, 1996–2012, 2013–2029, 2030–2046, 2047–2062, 2063–2079, 2080–2096, 2097–2113, 2114–2130, 2131–2147, 2148–2164, 2165–2191, 2192–2208, 2209–2225, 2226–2242, 2243–2259, 2260–2276, 2277–2293, 2294–2310, 2311–2327, 2328–2344, 2345–2361, 2362–2378, 2379–2395, 2396–2412, 2413–2429, and 2430–2446. Positions 1893–2446 are 32 X approximate tandem repeats, Ser/Thr-rich; that stretch reads VTTTTKITSH…SESTPSLSSS (554 aa). Positions 1907–1947 are enriched in polar residues; sequence FTSSIATTETPSHSTPRFTSSITTTETPSHSTPRFTSSITN. Residues 1948-2056 are compositionally biased toward low complexity; sequence TKTTSHSSPS…ITTETTSHST (109 aa). 4 stretches are compositionally biased toward low complexity: residues 2100-2170, 2177-2384, 2393-2447, and 2464-2507; these read TETT…TTET, TTET…TTET, TSWV…SSST, and TTSE…TTTT. 6 disordered regions span residues 2100-2447, 2464-2508, 2578-2608, 2631-2656, 2834-2858, and 2897-2937; these read TETT…SSST, TTSE…TTTD, TQTP…DSST, IPST…TSTS, MMPE…VPTN, and SSLP…TSRR. Over residues 2578-2602 the composition is skewed to polar residues; that stretch reads TQTPPVLTSATGTQTSPAPTTVTFG. 3 stretches are compositionally biased toward low complexity: residues 2633-2656, 2834-2849, and 2905-2937; these read STHS…TSTS, MMPE…ASSS, and TSSK…TSRR. The region spanning 2976–3009 is the EGF-like domain; sequence SGDRCQLQTRCQNGGQWDGLKCQCPSTFYGSSCE. 2 cysteine pairs are disulfide-bonded: Cys-2980-Cys-2986 and Cys-2999-Cys-3008. Residues 3018–3143 enclose the SEA domain; that stretch reads DVVETEVGME…DSIKVNNNSK (126 aa). Residues 3227–3247 traverse the membrane as a helical segment; it reads LVGGLTAGAALLVLLLLALGV.

Post-translationally, highly O-glycosylated and probably also N-glycosylated. In terms of tissue distribution, broad specificity; small intestine, colon, colonic tumors, heart, liver, thymus, prostate, pancreas and gall bladder.

The protein resides in the membrane. The protein localises to the secreted. Functionally, major glycoprotein component of a variety of mucus gels. Thought to provide a protective, lubricating barrier against particles and infectious agents at mucosal surfaces. May be involved in ligand binding and intracellular signaling. This Homo sapiens (Human) protein is Mucin-3A.